The primary structure comprises 419 residues: Putative nucleobase-ascorbate transporter 9 (419 aa).

Residues 1–22 (MANGAGNGGGGAGGNGGGGNNG) are compositionally biased toward gly residues. The interval 1–28 (MANGAGNGGGGAGGNGGGGNNGAGNRAE) is disordered. 10 consecutive transmembrane segments (helical) span residues 64–84 (LLSL…MGGG), 91–111 (VIQT…FFGT), 113–133 (LPVI…IIYS), 153–173 (IQGA…LGVW), 184–204 (SIAP…FPLV), 220–240 (GMML…SSGV), 273–293 (SFAM…LFYA), 313–333 (RVIQ…KFGA), 334–354 (FFAS…LCFV), and 370–390 (FNTK…PQYF).

Belongs to the nucleobase:cation symporter-2 (NCS2) (TC 2.A.40) family.

It localises to the membrane. The sequence is that of Putative nucleobase-ascorbate transporter 9 (NAT9) from Arabidopsis thaliana (Mouse-ear cress).